Here is a 306-residue protein sequence, read N- to C-terminus: Aspartate carbamoyltransferase catalytic subunit (306 aa).

Carbamoyl phosphate is bound by residues Arg51 and Thr52. L-aspartate is bound at residue Lys80. Carbamoyl phosphate-binding residues include Arg101, His129, and Gln132. 2 residues coordinate L-aspartate: Arg162 and Arg224. The carbamoyl phosphate site is built by Leu263 and Pro264.

It belongs to the aspartate/ornithine carbamoyltransferase superfamily. ATCase family. In terms of assembly, heterododecamer (2C3:3R2) of six catalytic PyrB chains organized as two trimers (C3), and six regulatory PyrI chains organized as three dimers (R2).

It catalyses the reaction carbamoyl phosphate + L-aspartate = N-carbamoyl-L-aspartate + phosphate + H(+). It functions in the pathway pyrimidine metabolism; UMP biosynthesis via de novo pathway; (S)-dihydroorotate from bicarbonate: step 2/3. Catalyzes the condensation of carbamoyl phosphate and aspartate to form carbamoyl aspartate and inorganic phosphate, the committed step in the de novo pyrimidine nucleotide biosynthesis pathway. In Parabacteroides distasonis (strain ATCC 8503 / DSM 20701 / CIP 104284 / JCM 5825 / NCTC 11152), this protein is Aspartate carbamoyltransferase catalytic subunit.